A 555-amino-acid chain; its full sequence is Vacuolar fusion protein MON1 homolog A (555 aa).

A compositionally biased stretch (basic and acidic residues) spans 1–12 (MAADMQRKRSSE). The disordered stretch occupies residues 1–87 (MAADMQRKRS…RGPPPLPADM (87 aa)). Residues serine 31 and serine 56 each carry the phosphoserine modification. Threonine 61 bears the Phosphothreonine mark. Serine 91 is modified (phosphoserine). A disordered region spans residues 114-147 (PGSSEDWLDPPGAVGRPATEPPREGTAEGDEEDA).

It belongs to the MON1/SAND family. In terms of assembly, interacts with CCZ1. Found in a complex with RMC1, CCZ1, MON1A and MON1B. The MON1A-CCZ1B complex interacts with RIMOC1. The MON1A-CCZ1B complex interacts with RAB7A and this interaction is enhanced in the presence of RIMOC1.

Plays an important role in membrane trafficking through the secretory apparatus. Not involved in endocytic trafficking to lysosomes. Acts in concert with CCZ1, as a guanine exchange factor (GEF) for RAB7, promotes the exchange of GDP to GTP, converting it from an inactive GDP-bound form into an active GTP-bound form. The chain is Vacuolar fusion protein MON1 homolog A (MON1A) from Macaca fascicularis (Crab-eating macaque).